Here is a 71-residue protein sequence, read N- to C-terminus: Small ribosomal subunit protein bS21 (71 aa).

Belongs to the bacterial ribosomal protein bS21 family.

This is Small ribosomal subunit protein bS21 from Shewanella sp. (strain MR-4).